A 238-amino-acid chain; its full sequence is Ribonuclease PH (238 aa).

Phosphate contacts are provided by residues Arg-86 and 124 to 126 (GTR).

The protein belongs to the RNase PH family. As to quaternary structure, homohexameric ring arranged as a trimer of dimers.

The enzyme catalyses tRNA(n+1) + phosphate = tRNA(n) + a ribonucleoside 5'-diphosphate. Functionally, phosphorolytic 3'-5' exoribonuclease that plays an important role in tRNA 3'-end maturation. Removes nucleotide residues following the 3'-CCA terminus of tRNAs; can also add nucleotides to the ends of RNA molecules by using nucleoside diphosphates as substrates, but this may not be physiologically important. Probably plays a role in initiation of 16S rRNA degradation (leading to ribosome degradation) during starvation. The chain is Ribonuclease PH from Sphingopyxis alaskensis (strain DSM 13593 / LMG 18877 / RB2256) (Sphingomonas alaskensis).